The primary structure comprises 354 residues: Putative Xaa-Pro aminopeptidase (354 aa).

Mn(2+) contacts are provided by Asp213, Asp224, His290, Glu319, and Glu333.

The protein belongs to the peptidase M24B family. The cofactor is Mn(2+).

The enzyme catalyses Release of any N-terminal amino acid, including proline, that is linked to proline, even from a dipeptide or tripeptide.. The chain is Putative Xaa-Pro aminopeptidase (pepP) from Mycoplasma pneumoniae (strain ATCC 29342 / M129 / Subtype 1) (Mycoplasmoides pneumoniae).